Here is a 352-residue protein sequence, read N- to C-terminus: RNA 3'-terminal phosphate cyclase (352 aa).

ATP-binding positions include Q100 and 297 to 301 (HLADQ). H322 functions as the Tele-AMP-histidine intermediate in the catalytic mechanism.

Belongs to the RNA 3'-terminal cyclase family. Type 1 subfamily.

It localises to the cytoplasm. The enzyme catalyses a 3'-end 3'-phospho-ribonucleotide-RNA + ATP = a 3'-end 2',3'-cyclophospho-ribonucleotide-RNA + AMP + diphosphate. In terms of biological role, catalyzes the conversion of 3'-phosphate to a 2',3'-cyclic phosphodiester at the end of RNA. The mechanism of action of the enzyme occurs in 3 steps: (A) adenylation of the enzyme by ATP; (B) transfer of adenylate to an RNA-N3'P to produce RNA-N3'PP5'A; (C) and attack of the adjacent 2'-hydroxyl on the 3'-phosphorus in the diester linkage to produce the cyclic end product. The biological role of this enzyme is unknown but it is likely to function in some aspects of cellular RNA processing. This Methanosarcina mazei (strain ATCC BAA-159 / DSM 3647 / Goe1 / Go1 / JCM 11833 / OCM 88) (Methanosarcina frisia) protein is RNA 3'-terminal phosphate cyclase.